The following is a 215-amino-acid chain: Cytochrome b6 (215 aa).

Residues 32–52 traverse the membrane as a helical segment; it reads IFYCLGGITLVCFLIQFATGF. C35 contacts heme c. Heme b-binding residues include H86 and H100. The next 3 helical transmembrane spans lie at 90-110, 116-136, and 186-206; these read ASMM…TGGF, LTWV…VTGY, and AHTF…FLMI. Heme b contacts are provided by H187 and H202.

This sequence belongs to the cytochrome b family. PetB subfamily. The 4 large subunits of the cytochrome b6-f complex are cytochrome b6, subunit IV (17 kDa polypeptide, PetD), cytochrome f and the Rieske protein, while the 4 small subunits are PetG, PetL, PetM and PetN. The complex functions as a dimer. It depends on heme b as a cofactor. The cofactor is heme c.

It localises to the cellular thylakoid membrane. Component of the cytochrome b6-f complex, which mediates electron transfer between photosystem II (PSII) and photosystem I (PSI), cyclic electron flow around PSI, and state transitions. The sequence is that of Cytochrome b6 from Nostoc punctiforme (strain ATCC 29133 / PCC 73102).